A 453-amino-acid chain; its full sequence is Ribulose bisphosphate carboxylase large chain (453 aa).

A propeptide spanning residues 1 to 2 is cleaved from the precursor; sequence MS. P3 carries the N-acetylproline modification. K14 is modified (N6,N6,N6-trimethyllysine). Residues N123 and T173 each contribute to the substrate site. K175 functions as the Proton acceptor in the catalytic mechanism. Substrate is bound at residue K177. 3 residues coordinate Mg(2+): K201, D203, and E204. At K201 the chain carries N6-carboxylysine. The active-site Proton acceptor is the H294. Substrate-binding residues include R295, H327, and S379.

The protein belongs to the RuBisCO large chain family. Type I subfamily. In terms of assembly, heterohexadecamer of 8 large chains and 8 small chains; disulfide-linked. The disulfide link is formed within the large subunit homodimers. Mg(2+) serves as cofactor. Post-translationally, the disulfide bond which can form in the large chain dimeric partners within the hexadecamer appears to be associated with oxidative stress and protein turnover.

It localises to the plastid. The protein resides in the chloroplast. It carries out the reaction 2 (2R)-3-phosphoglycerate + 2 H(+) = D-ribulose 1,5-bisphosphate + CO2 + H2O. It catalyses the reaction D-ribulose 1,5-bisphosphate + O2 = 2-phosphoglycolate + (2R)-3-phosphoglycerate + 2 H(+). RuBisCO catalyzes two reactions: the carboxylation of D-ribulose 1,5-bisphosphate, the primary event in carbon dioxide fixation, as well as the oxidative fragmentation of the pentose substrate in the photorespiration process. Both reactions occur simultaneously and in competition at the same active site. The protein is Ribulose bisphosphate carboxylase large chain of Sherardia arvensis (Blue field-madder).